The sequence spans 505 residues: ATP synthase subunit alpha (505 aa).

169–176 (GDRQIGKT) contributes to the ATP binding site.

This sequence belongs to the ATPase alpha/beta chains family. F-type ATPases have 2 components, CF(1) - the catalytic core - and CF(0) - the membrane proton channel. CF(1) has five subunits: alpha(3), beta(3), gamma(1), delta(1), epsilon(1). CF(0) has three main subunits: a(1), b(2) and c(9-12). The alpha and beta chains form an alternating ring which encloses part of the gamma chain. CF(1) is attached to CF(0) by a central stalk formed by the gamma and epsilon chains, while a peripheral stalk is formed by the delta and b chains.

It localises to the cell inner membrane. It carries out the reaction ATP + H2O + 4 H(+)(in) = ADP + phosphate + 5 H(+)(out). Its function is as follows. Produces ATP from ADP in the presence of a proton gradient across the membrane. The alpha chain is a regulatory subunit. In Desulfatibacillum aliphaticivorans, this protein is ATP synthase subunit alpha.